A 258-amino-acid polypeptide reads, in one-letter code: Axonemal dynein light intermediate polypeptide 1 (258 aa).

Disordered stretches follow at residues Met1–Asp60 and Asp202–Lys231. Positions Met176–Ala255 form a coiled coil.

The protein belongs to the inner dynein arm light chain family. Interacts with CFAP45. Interacts with DYNC1H1. As to expression, predominantly expressed in the testis, also detected at lower levels in several tissues expressing cilia. Strongly expressed in elongating spermatid cells (at protein level).

Its subcellular location is the cell projection. It localises to the cilium. The protein resides in the flagellum. The protein localises to the dynein axonemal particle. It is found in the cytoplasm. Involved in sperm flagellum assembly. The sequence is that of Axonemal dynein light intermediate polypeptide 1 from Mus musculus (Mouse).